The chain runs to 155 residues: Ribosomal RNA large subunit methyltransferase H (155 aa).

S-adenosyl-L-methionine-binding positions include leucine 72, glycine 103, and 122–127 (LSPLTF).

Belongs to the RNA methyltransferase RlmH family. Homodimer.

Its subcellular location is the cytoplasm. The enzyme catalyses pseudouridine(1915) in 23S rRNA + S-adenosyl-L-methionine = N(3)-methylpseudouridine(1915) in 23S rRNA + S-adenosyl-L-homocysteine + H(+). Specifically methylates the pseudouridine at position 1915 (m3Psi1915) in 23S rRNA. This is Ribosomal RNA large subunit methyltransferase H from Alkalilimnicola ehrlichii (strain ATCC BAA-1101 / DSM 17681 / MLHE-1).